The chain runs to 31 residues: MTVAIDYFLLVGFCFAVTSGLWIGLKSIKLI.

The chain crosses the membrane as a helical span at residues 3 to 23 (VAIDYFLLVGFCFAVTSGLWI).

It belongs to the PetL family. In terms of assembly, the 4 large subunits of the cytochrome b6-f complex are cytochrome b6, subunit IV (17 kDa polypeptide, PetD), cytochrome f and the Rieske protein, while the 4 small subunits are PetG, PetL, PetM and PetN. The complex functions as a dimer.

The protein resides in the plastid. Its subcellular location is the chloroplast thylakoid membrane. Its function is as follows. Component of the cytochrome b6-f complex, which mediates electron transfer between photosystem II (PSII) and photosystem I (PSI), cyclic electron flow around PSI, and state transitions. PetL is important for photoautotrophic growth as well as for electron transfer efficiency and stability of the cytochrome b6-f complex. The polypeptide is Cytochrome b6-f complex subunit 6 (Phaeodactylum tricornutum (strain CCAP 1055/1)).